Here is a 197-residue protein sequence, read N- to C-terminus: Molybdenum cofactor guanylyltransferase (197 aa).

GTP-binding positions include 10-12 (LAG), Lys23, Asn51, Asp69, and Asp99. Asp99 is a binding site for Mg(2+).

This sequence belongs to the MobA family. As to quaternary structure, monomer. Mg(2+) is required as a cofactor.

Its subcellular location is the cytoplasm. It catalyses the reaction Mo-molybdopterin + GTP + H(+) = Mo-molybdopterin guanine dinucleotide + diphosphate. Transfers a GMP moiety from GTP to Mo-molybdopterin (Mo-MPT) cofactor (Moco or molybdenum cofactor) to form Mo-molybdopterin guanine dinucleotide (Mo-MGD) cofactor. In Shewanella sp. (strain MR-4), this protein is Molybdenum cofactor guanylyltransferase.